Consider the following 145-residue polypeptide: Brain and acute leukemia cytoplasmic protein (145 aa).

Gly2 carries the N-myristoyl glycine lipid modification. The S-palmitoyl cysteine moiety is linked to residue Cys3. The tract at residues 3–35 is interaction with CAMK2A; it reads CGGSRADAIEPRYYESWTRETESTWLTYTDSDA. A disordered region spans residues 27–119; the sequence is WLTYTDSDAP…AKRDAKRMPA (93 aa). Over residues 32–46 the composition is skewed to low complexity; the sequence is DSDAPPSAAAPDSGP. Residues 83-108 show a composition bias toward polar residues; the sequence is CETQCPNPQSLSSGPLTQKQNGLQTT. The span at 109-119 shows a compositional bias: basic and acidic residues; it reads EAKRDAKRMPA.

As to quaternary structure, interacts with CAMK2A. Post-translationally, palmitoylation and myristoylation target the protein to the lipid rafts. In terms of tissue distribution, predominantly expressed in neuroectoderm-derived tissues. Expressed in the brain and spinal cord, and at low levels, in the adrenal gland. In the bone marrow, confined to the CD34+ progenitor cells. Not found in peripheral blood mononuclear cells, nor lymph nodes. Tends to be expressed at high levels in acute myeloid leukemia and glioblastoma cells.

It is found in the cytoplasm. Its subcellular location is the synapse. The protein localises to the synaptosome. It localises to the membrane raft. The protein resides in the postsynaptic density. May play a synaptic role at the postsynaptic lipid rafts possibly through interaction with CAMK2A. The sequence is that of Brain and acute leukemia cytoplasmic protein from Homo sapiens (Human).